Reading from the N-terminus, the 208-residue chain is Probable adenylyl-sulfate kinase (208 aa).

Residue 38–45 (GLSGSGKS) participates in ATP binding. The active-site Phosphoserine intermediate is Ser-112.

This sequence belongs to the APS kinase family.

It catalyses the reaction adenosine 5'-phosphosulfate + ATP = 3'-phosphoadenylyl sulfate + ADP + H(+). It functions in the pathway sulfur metabolism; hydrogen sulfide biosynthesis; sulfite from sulfate: step 2/3. Functionally, catalyzes the synthesis of activated sulfate. This Halalkalibacterium halodurans (strain ATCC BAA-125 / DSM 18197 / FERM 7344 / JCM 9153 / C-125) (Bacillus halodurans) protein is Probable adenylyl-sulfate kinase.